Reading from the N-terminus, the 107-residue chain is Cysteine proteinase inhibitor (107 aa).

The region spanning Gly18 to Ala107 is the Cystatin domain. The Secondary area of contact signature appears at Gln63 to Gly67.

The protein belongs to the cystatin family. Phytocystatin subfamily. Expressed in embryos, developing endosperms, leaves, roots, flowers and pollen grains.

Inhibits papain, ficin, cathepsin B and, to a lesser extent, chymopapain, but is inactive against bromelain. Inhibits the growth of pathogenic fungi. Regulated by the DOF transcription factors SAD (activator) and BPBF (repressor). This chain is Cysteine proteinase inhibitor (ICY), found in Hordeum vulgare (Barley).